The primary structure comprises 346 residues: Anthranilate phosphoribosyltransferase (346 aa).

Residues G80, 83-84 (GD), T88, 90-93 (NIST), 108-116 (KHGNTAVSS), and S120 contribute to the 5-phospho-alpha-D-ribose 1-diphosphate site. G80 is an anthranilate binding site. S92 contributes to the Mg(2+) binding site. Residue N111 participates in anthranilate binding. R166 is an anthranilate binding site. Positions 225 and 226 each coordinate Mg(2+).

The protein belongs to the anthranilate phosphoribosyltransferase family. In terms of assembly, homodimer. Mg(2+) serves as cofactor.

The catalysed reaction is N-(5-phospho-beta-D-ribosyl)anthranilate + diphosphate = 5-phospho-alpha-D-ribose 1-diphosphate + anthranilate. It participates in amino-acid biosynthesis; L-tryptophan biosynthesis; L-tryptophan from chorismate: step 2/5. In terms of biological role, catalyzes the transfer of the phosphoribosyl group of 5-phosphorylribose-1-pyrophosphate (PRPP) to anthranilate to yield N-(5'-phosphoribosyl)-anthranilate (PRA). In Desulforudis audaxviator (strain MP104C), this protein is Anthranilate phosphoribosyltransferase.